A 462-amino-acid chain; its full sequence is Tubby-like F-box protein 7 (462 aa).

Residues 54–109 (SKWAGLPPELLRDVMKRLEEDDSNWPSRKDVVACASVCTTWRDMCKDIVRNPEFCG) enclose the F-box domain. Disordered regions lie at residues 317–338 (FSEF…DDVN) and 383–418 (QPSS…SSSN). Low complexity predominate over residues 383-417 (QPSSGAASEPSQAGQAAQQQTQPSQPSSSSSSSSS).

This sequence belongs to the TUB family. Ubiquitous.

The chain is Tubby-like F-box protein 7 (TULP7) from Oryza sativa subsp. japonica (Rice).